We begin with the raw amino-acid sequence, 562 residues long: Catalase T (562 aa).

Active-site residues include His-64 and Asn-137. A heme-binding site is contributed by Tyr-351.

It belongs to the catalase family. Homotetramer. It depends on heme as a cofactor.

Its subcellular location is the cytoplasm. It catalyses the reaction 2 H2O2 = O2 + 2 H2O. In terms of biological role, occurs in almost all aerobically respiring organisms and serves to protect cells from the toxic effects of hydrogen peroxide. This Saccharomyces cerevisiae (strain ATCC 204508 / S288c) (Baker's yeast) protein is Catalase T (CTT1).